The following is a 434-amino-acid chain: Eukaryotic translation initiation factor 3 subunit E-2 (434 aa).

Residues 219–392 (FFNHPKGRDL…GHVVMGTQPL (174 aa)) form the PCI domain.

The protein belongs to the eIF-3 subunit E family. Component of the eukaryotic translation initiation factor 3 (eIF-3) complex. The eIF-3 complex interacts with pix. Interacts with mxt.

It localises to the cytoplasm. In terms of biological role, component of the eukaryotic translation initiation factor 3 (eIF-3) complex, which is involved in protein synthesis of a specialized repertoire of mRNAs and, together with other initiation factors, stimulates binding of mRNA and methionyl-tRNAi to the 40S ribosome. The eIF-3 complex specifically targets and initiates translation of a subset of mRNAs involved in cell proliferation. The protein is Eukaryotic translation initiation factor 3 subunit E-2 (eIF3-S6-2) of Drosophila willistoni (Fruit fly).